The chain runs to 375 residues: Protein RecA (375 aa).

A disordered region spans residues 1 to 20 (MPAEMKSAASGSDPRSSGER). 79–86 (GPESSGKT) provides a ligand contact to ATP.

This sequence belongs to the RecA family.

The protein localises to the cytoplasm. Its function is as follows. Can catalyze the hydrolysis of ATP in the presence of single-stranded DNA, the ATP-dependent uptake of single-stranded DNA by duplex DNA, and the ATP-dependent hybridization of homologous single-stranded DNAs. It interacts with LexA causing its activation and leading to its autocatalytic cleavage. In Parasynechococcus marenigrum (strain WH8102), this protein is Protein RecA.